A 69-amino-acid chain; its full sequence is Lantibiotic lichenicidin A2 (69 aa).

The propeptide occupies 1 to 37 (MKNSAAREAFKGANHPAGMVSEEELKALVGGNDVNPE). Residue Thr-38 is modified to 2-oxobutanoic acid. Residues Thr-39, Thr-42, and Thr-43 each carry the (Z)-2,3-didehydrobutyrine modification. Residues 44–48 (SSWTC) constitute a cross-link (lanthionine (Ser-Cys)). At Ser-45 the chain carries 2,3-didehydroalanine (Ser). Residues Thr-50 and Thr-54 each carry the (Z)-2,3-didehydrobutyrine modification. Positions 56 to 60 (SASLC) form a cross-link, lanthionine (Ser-Cys). 2 consecutive cross-links (beta-methyllanthionine (Thr-Cys)) follow at residues 62 to 65 (TTKC) and 66 to 69 (TSRC). Thr-63 carries the (Z)-2,3-didehydrobutyrine modification.

In terms of processing, maturation of lantibiotics involves the enzymatic conversion of Thr, and Ser into dehydrated AA and the formation of thioether bonds with cysteine. This is followed by membrane translocation and cleavage of the modified precursor.

Its subcellular location is the secreted. The protein localises to the cell wall. In terms of biological role, lanthionine-containing peptide antibiotic (lantibiotic) active on Gram-positive bacteria. The bactericidal activity of lantibiotics is based on depolarization of energized bacterial cytoplasmic membranes, initiated by the formation of aqueous transmembrane pores. When present individually, LchA2 exhibits activity towards L.lactis HP. When combined with LchA1, it displays activity towards a broad spectrum of non-pathogenic and pathogenic Gram-positive bacteria including strains of L.monocytogenes, methicillin-resistant S.aureus, S.pneumoniae and strains of vancomycin-resistant enterococci, but not towards E.faecium L4001 and BM4147-1. Combined LchA1 and LchA2 peptides also inhibit Bacillus sp. HIL-Y85/54728, L.lactis DPC3417 and B.halodurans C-125, which produce lantibiotics themselves. Inactivated by proteinase K and pronase E, but not by trypsin and chymotrypsin. The chain is Lantibiotic lichenicidin A2 from Bacillus licheniformis (strain ATCC 14580 / DSM 13 / JCM 2505 / CCUG 7422 / NBRC 12200 / NCIMB 9375 / NCTC 10341 / NRRL NRS-1264 / Gibson 46).